We begin with the raw amino-acid sequence, 505 residues long: Cytochrome P450 52C1 (505 aa).

The helical transmembrane segment at 4–21 threads the bilayer; that stretch reads LFCFLAGIIVVYKAAQYY. A heme-binding site is contributed by Cys453.

The protein belongs to the cytochrome P450 family. Heme is required as a cofactor.

It is found in the membrane. Together with an NADPH cytochrome P450 the enzyme system catalyzes the terminal hydroxylation as the first step in the assimilation of alkanes and fatty acids. This chain is Cytochrome P450 52C1 (CYP52C1), found in Candida tropicalis (Yeast).